The following is a 200-amino-acid chain: Histone chaperone asf1a-B (200 aa).

The protein belongs to the ASF1 family. Interacts with histone H3 (including both histone H3.1 and H3.3) and histone H4.

The protein resides in the nucleus. Functionally, histone chaperone that facilitates histone deposition and histone exchange and removal during nucleosome assembly and disassembly. The protein is Histone chaperone asf1a-B (asf1ab) of Xenopus laevis (African clawed frog).